Reading from the N-terminus, the 290-residue chain is Protein EURL homolog (290 aa).

The disordered stretch occupies residues 185 to 206 (SHSQAQKTEETSSGPEGTIQTQ). Residues 228–251 (AKLQQRIQEVFEELTHQVQEKDSL) are a coiled coil.

Belongs to the EURL family. Interacts with CCDC85B. Expressed in brain (at protein level). Expressed in neural progenitor cells and postmitotic neurons of the embryonic cerebral cortex.

Its function is as follows. Plays a role in cortical progenitor cell proliferation and differentiation. Promotes dendritic spine development of post-migratory cortical projection neurons by modulating the beta-catenin signaling pathway. In Mus musculus (Mouse), this protein is Protein EURL homolog.